The sequence spans 323 residues: Glutamyl-Q tRNA(Asp) synthetase (323 aa).

Residues 5 to 9 (RFAPT) and Glu41 each bind L-glutamate. The 'HIGH' region motif lies at 8 to 18 (PTPSGALHLGN). Positions 105, 107, 129, and 133 each coordinate Zn(2+). L-glutamate-binding residues include Tyr193 and Arg211. Residues 249–253 (RLAKR) carry the 'KMSKS' region motif. Lys252 lines the ATP pocket.

It belongs to the class-I aminoacyl-tRNA synthetase family. GluQ subfamily. It depends on Zn(2+) as a cofactor.

In terms of biological role, catalyzes the tRNA-independent activation of glutamate in presence of ATP and the subsequent transfer of glutamate onto a tRNA(Asp). Glutamate is transferred on the 2-amino-5-(4,5-dihydroxy-2-cyclopenten-1-yl) moiety of the queuosine in the wobble position of the QUC anticodon. In Symbiobacterium thermophilum (strain DSM 24528 / JCM 14929 / IAM 14863 / T), this protein is Glutamyl-Q tRNA(Asp) synthetase.